A 463-amino-acid polypeptide reads, in one-letter code: GTPase Der (463 aa).

A disordered region spans residues 1 to 20; it reads MDEGDEDLISGRGFTEGARK. EngA-type G domains follow at residues 27–190 and 202–375; these read GVLA…KQAE and RRVA…ESWD. GTP contacts are provided by residues 33–40, 80–84, 142–145, 208–215, 255–259, and 320–323; these read GRPNVGKS, DTGGW, NKID, DTAGI, and NKWD. The KH-like domain maps to 376-458; the sequence is QRIPTGKLNA…PIQISVNIRE (83 aa).

It belongs to the TRAFAC class TrmE-Era-EngA-EngB-Septin-like GTPase superfamily. EngA (Der) GTPase family. In terms of assembly, associates with the 50S ribosomal subunit.

Functionally, GTPase that plays an essential role in the late steps of ribosome biogenesis. The chain is GTPase Der from Bifidobacterium longum (strain NCC 2705).